The sequence spans 637 residues: Epithelial sodium channel subunit alpha (637 aa).

A disordered region spans residues 1–34 (MGTASRGGSVKAEKMPEGEKTRQCKQETEQQQKE). Residues 1-76 (MGTASRGGSV…VCSKKNKMKT (76 aa)) lie on the Cytoplasmic side of the membrane. Residues 11–34 (KAEKMPEGEKTRQCKQETEQQQKE) are compositionally biased toward basic and acidic residues. Residues 77–97 (AFWSVLFILTFGLMYWQFGIL) form a helical membrane-spanning segment. Over 98–548 (YREYFSYPVN…NQWSLWFGSS (451 aa)) the chain is Extracellular. 10 cysteine pairs are disulfide-bonded: Cys125–Cys292, Cys217–Cys224, Cys269–Cys276, Cys380–Cys465, Cys402–Cys442, Cys402–Cys461, Cys406–Cys457, Cys415–Cys442, Cys415–Cys465, and Cys417–Cys431. The chain crosses the membrane as a helical span at residues 549 to 569 (VLSVMELAELILDFTVITFIL). Topologically, residues 570 to 637 (AFRWFRSKQW…PSKDGETGLE (68 aa)) are cytoplasmic.

It belongs to the amiloride-sensitive sodium channel (TC 1.A.6) family. SCNN1A subfamily. In terms of assembly, heterotrimer; containing an alpha/SCNN1A, a beta/SCNN1B and a gamma/SCNN1G subunit. In terms of tissue distribution, the long isoform has been found in cochlea, colon, and cartilage. The short isoform is only found in cochlea.

It is found in the apical cell membrane. The protein resides in the cell projection. Its subcellular location is the cilium. It localises to the cytoplasmic granule. The protein localises to the cytoplasm. It is found in the cytoplasmic vesicle. The protein resides in the secretory vesicle. Its subcellular location is the acrosome. It localises to the flagellum. It catalyses the reaction Na(+)(in) = Na(+)(out). Its activity is regulated as follows. Originally identified and characterized by its inhibition by the diuretic drug amiloride. Functionally, this is one of the three pore-forming subunits of the heterotrimeric epithelial sodium channel (ENaC), a critical regulator of sodium balance and fluid homeostasis. ENaC operates in epithelial tissues, where it mediates the electrodiffusion of sodium ions from extracellular fluid through the apical membrane of cells, with water following osmotically. In Gallus gallus (Chicken), this protein is Epithelial sodium channel subunit alpha.